Consider the following 516-residue polypeptide: GMP synthase [glutamine-hydrolyzing] (516 aa).

The region spanning lysine 8 to leucine 198 is the Glutamine amidotransferase type-1 domain. Catalysis depends on cysteine 84, which acts as the Nucleophile. Catalysis depends on residues histidine 172 and glutamate 174. Residues tryptophan 199–arginine 391 form the GMPS ATP-PPase domain. Serine 226 to serine 232 is an ATP binding site.

As to quaternary structure, homodimer.

The enzyme catalyses XMP + L-glutamine + ATP + H2O = GMP + L-glutamate + AMP + diphosphate + 2 H(+). It participates in purine metabolism; GMP biosynthesis; GMP from XMP (L-Gln route): step 1/1. In terms of biological role, catalyzes the synthesis of GMP from XMP. In Francisella tularensis subsp. holarctica (strain FTNF002-00 / FTA), this protein is GMP synthase [glutamine-hydrolyzing].